A 208-amino-acid polypeptide reads, in one-letter code: Small ribosomal subunit protein uS4 (208 aa).

The 64-residue stretch at 98–161 (RRLDNVIYRL…KESPRIKELL (64 aa)) folds into the S4 RNA-binding domain.

This sequence belongs to the universal ribosomal protein uS4 family. As to quaternary structure, part of the 30S ribosomal subunit. Contacts protein S5. The interaction surface between S4 and S5 is involved in control of translational fidelity.

Its function is as follows. One of the primary rRNA binding proteins, it binds directly to 16S rRNA where it nucleates assembly of the body of the 30S subunit. Functionally, with S5 and S12 plays an important role in translational accuracy. The protein is Small ribosomal subunit protein uS4 of Pelotomaculum thermopropionicum (strain DSM 13744 / JCM 10971 / SI).